A 575-amino-acid polypeptide reads, in one-letter code: Interleukin-1 receptor-like 2 (575 aa).

Residues 1–19 (MWSLLLCGLSIALPLSVTA) form the signal peptide. 3 Ig-like C2-type domains span residues 20 to 111 (DGCK…VNLT), 126 to 211 (PNLS…VLNG), and 222 to 318 (YGGS…MCHA). Over 20–335 (DGCKDIFMKN…ILQLPAPDFR (316 aa)) the chain is Extracellular. 9 N-linked (GlcNAc...) asparagine glycosylation sites follow: N41, N59, N109, N127, N184, N234, N250, N266, and N299. C42 and C95 are joined by a disulfide. The cysteines at positions 146 and 195 are disulfide-linked. C249 and C316 form a disulfide bridge. A helical transmembrane segment spans residues 336 to 356 (AYLIGGLIALVAVAVSVVYIY). At 357–575 (NIFKIDIVLW…RRKKCTLTTG (219 aa)) the chain is on the cytoplasmic side. Residues 381-536 (KLYDAYVLYP…KFWKTVRYHM (156 aa)) form the TIR domain. E467 is an active-site residue.

The protein belongs to the interleukin-1 receptor family. In terms of assembly, interacts with IL1RAP; the association is enhanced by IL36B indicative for an functional signaling complex and inhibited by IL36RN. As to expression, expressed in synovial fibroblasts and articular chondrocytes. Expressed in keratinocytes and monocyte-derived dendritic cells. Expressed in monocytes and myeloid dendritic cells; at protein level.

The protein localises to the membrane. It catalyses the reaction NAD(+) + H2O = ADP-D-ribose + nicotinamide + H(+). Functionally, receptor for interleukin-36 (IL36A, IL36B and IL36G). After binding to interleukin-36 associates with the coreceptor IL1RAP to form the interleukin-36 receptor complex which mediates interleukin-36-dependent activation of NF-kappa-B, MAPK and other pathways. The IL-36 signaling system is thought to be present in epithelial barriers and to take part in local inflammatory response; it is similar to the IL-1 system. Seems to be involved in skin inflammatory response by induction of the IL-23/IL-17/IL-22 pathway. This is Interleukin-1 receptor-like 2 (IL1RL2) from Homo sapiens (Human).